Consider the following 283-residue polypeptide: MKNIGINVNTTKDPNKEMLNFIIESIKNIDKSVNIKTYENCMGLDENESSSLDVIIVLGGDGTILNTSRNVLRSKTPILGINIGHLGFLAQVEINSVEAALEKLFRGEYTIEKRDMIQCTYNEGNKIKRYDGLNDVVLYRGIKSRIQRYDVYINDAFYNSFSGDGIIICTSTGSTAYNLSAGGPIIHPLLDVLCLTPMYSQFFASRSIVLDSRSLISISIEKNYEDSFLSIDGQKWVAVNGSQTIKINKSKNKRRLIKFDDAYFNTLREKIIFNAKGCEGGIL.

The active-site Proton acceptor is aspartate 61. Residues 61–62 (DG), 134–135 (ND), arginine 145, aspartate 164, 175–180 (TAYNLS), and glutamine 234 contribute to the NAD(+) site.

The protein belongs to the NAD kinase family. It depends on a divalent metal cation as a cofactor.

The protein localises to the cytoplasm. It carries out the reaction NAD(+) + ATP = ADP + NADP(+) + H(+). Its function is as follows. Involved in the regulation of the intracellular balance of NAD and NADP, and is a key enzyme in the biosynthesis of NADP. Catalyzes specifically the phosphorylation on 2'-hydroxyl of the adenosine moiety of NAD to yield NADP. The protein is NAD kinase of Clostridium kluyveri (strain NBRC 12016).